The chain runs to 276 residues: Omega-amidase NIT2 (276 aa).

Residues F4–L248 form the CN hydrolase domain. At S26 the chain carries Phosphoserine. E43 (proton acceptor) is an active-site residue. An N6-acetyllysine; alternate modification is found at K68. An N6-succinyllysine; alternate modification is found at K68. Catalysis depends on K112, which acts as the Proton donor. An N6-succinyllysine mark is found at K123 and K130. C153 serves as the catalytic Nucleophile.

It belongs to the carbon-nitrogen hydrolase superfamily. NIT1/NIT2 family. Homodimer.

Its subcellular location is the cytoplasm. The enzyme catalyses a monoamide of a dicarboxylate + H2O = a dicarboxylate + NH4(+). It carries out the reaction 2-oxoglutaramate + H2O = 2-oxoglutarate + NH4(+). The catalysed reaction is 2-oxosuccinamate + H2O = oxaloacetate + NH4(+). In terms of biological role, has omega-amidase activity. The role of omega-amidase is to remove potentially toxic intermediates by converting 2-oxoglutaramate and 2-oxosuccinamate to biologically useful 2-oxoglutarate and oxaloacetate, respectively. Can also hydrolyze gamma-monomethyl-alpha-ketoglutarate in vitro. This Mus musculus (Mouse) protein is Omega-amidase NIT2.